The following is a 927-amino-acid chain: UPF0182 protein bll7333 (927 aa).

A run of 7 helical transmembrane segments spans residues 17–37 (AVVGLIIAALVIAIVLTLLAL), 65–85 (AVVFLAVWTATAVILLLNGWL), 134–154 (LALLVAAAEAGNWGVFLQFVY), 185–205 (WMMLALALSALFAAAIYLVHG), 220–240 (VIAHGSALLGLLFAVKAWSFG), 264–284 (VGLPALWLMIGLSGIAALAAW), and 297–317 (AAFLLVAIGSFVLSGLVPVLF).

The protein belongs to the UPF0182 family.

The protein localises to the cell membrane. The protein is UPF0182 protein bll7333 of Bradyrhizobium diazoefficiens (strain JCM 10833 / BCRC 13528 / IAM 13628 / NBRC 14792 / USDA 110).